A 719-amino-acid chain; its full sequence is MPRRKKKVKEVSESRNLEKKDVETTSSVSVKRKRRLEDAFIVISDSDGEEPKEENGLQKTKTKQSNRAKCLAKRKIAQMTEEEQFALALKMSEQEAREVNSQEEEEEELLRKAIAESLNSCRPSDASATRSRPLATGPSSQSHQEKTTDSGLTEGIWQLVPPSLFKGSHISQGNEAEEREEPWDHTEKTEEEPVSGSSGSWDQSSQPVFENVNVKSFDRCTGHSAEHTQCGKPQESTGRGSAFLKAVQGSGDTSRHCLPTLADAKGLQDTGGTVNYFWGIPFCPDGVDPNQYTKVILCQLEVYQKSLKMAQRQLLNKKGFGEPVLPRPPSLIQNECGQGEQASEKNECISEDMGDEDKEERQESRASDWHSKTKDFQESSIKSLKEKLLLEEEPTTSHGQSSQGIVEETSEEGNSVPASQSVAALTSKRSLVLMPESSAEEITVCPETQLSSSETFDLEREVSPGSRDILDGVRIIMADKEVGNKEDAEKEVAISTFSSSNQVSCPLCDQCFPPTKIERHAMYCNGLMEEDTVLTRRQKEAKTKSDSGTAAQTSLDIDKNEKCYLCKSLVPFREYQCHVDSCLQLAKADQGDGPEGSGRACSTVEGKWQQRLKNPKEKGHSEGRLLSFLEQSEHKTSDADIKSSETGAFRVPSPGMEEAGCSREMQSSFTRRDLNESPVKSFVSISEATDCLVDFKKQVTVQPGSRTRTKAGRGRRRKF.

The disordered stretch occupies residues Met-1 to Val-30. Residues Met-1 to Ser-101 form a necessary for transcriptional repression region. A compositionally biased stretch (basic and acidic residues) spans Lys-9 to Glu-23. Lys-20 participates in a covalent cross-link: Glycyl lysine isopeptide (Lys-Gly) (interchain with G-Cter in SUMO2). Ser-29 bears the Phosphoserine mark. Lys-31 participates in a covalent cross-link: Glycyl lysine isopeptide (Lys-Gly) (interchain with G-Cter in SUMO2). Residues Ile-43–Ala-68 are disordered. Phosphoserine occurs at positions 44 and 46. Positions Thr-60–Gln-78 match the LR motif motif. Residues Lys-75 and Lys-90 each participate in a glycyl lysine isopeptide (Lys-Gly) (interchain with G-Cter in SUMO2) cross-link. In terms of domain architecture, UIM 1 spans Thr-80–Val-99. 2 disordered regions span residues Glu-93–Leu-152 and Leu-164–Ser-205. The segment at Arg-97 to Glu-103 is UIM-linker. Positions Asn-100–Ser-200 are necessary for interaction with NR6A1 N-terminus. Ser-101 is modified (phosphoserine). One can recognise a UIM 2 domain in the interval Glu-105 to Ser-124. Residues Ser-117–Arg-130 are compositionally biased toward polar residues. Phosphoserine is present on Ser-140. Lys-188 participates in a covalent cross-link: Glycyl lysine isopeptide (Lys-Gly) (interchain with G-Cter in SUMO2). Over residues Ser-195–Ser-205 the composition is skewed to low complexity. Ser-205 carries the phosphoserine modification. A Glycyl lysine isopeptide (Lys-Gly) (interchain with G-Cter in SUMO2) cross-link involves residue Lys-245. Residues Thr-270–Gln-400 form an AIR region. The segment at Phe-320–Glu-378 is disordered. The segment covering Ile-349–Lys-358 has biased composition (acidic residues). A compositionally biased stretch (basic and acidic residues) spans Glu-359–Glu-378. Ser-379 is subject to Phosphoserine. Glycyl lysine isopeptide (Lys-Gly) (interchain with G-Cter in SUMO2) cross-links involve residues Lys-382 and Lys-387. Residues Glu-391 to Val-422 form a disordered region. Residues Gln-400–Ser-500 form a necessary for interaction with NR6A1 C-terminus region. A phosphoserine mark is found at Ser-402 and Ser-419. Positions Glu-412–Val-422 are enriched in polar residues. A Glycyl lysine isopeptide (Lys-Gly) (interchain with G-Cter in SUMO2) cross-link involves residue Lys-428. Ser-466 is subject to Phosphoserine. The segment at Gln-502–Glu-529 adopts a UBZ4-type zinc-finger fold. Residues Cys-505, Cys-508, His-520, and Cys-524 each contribute to the Zn(2+) site. Residues Cys-505 to Cys-582 are zinc-finger-like region. Residues Lys-544, Lys-559, Lys-562, Lys-587, and Lys-607 each participate in a glycyl lysine isopeptide (Lys-Gly) (interchain with G-Cter in SUMO2) cross-link. A disordered region spans residues Ala-588–Ser-668. Positions Asn-614–Gly-623 are enriched in basic and acidic residues. Residue Ser-627 is modified to Phosphoserine. A compositionally biased stretch (basic and acidic residues) spans Gln-631–Ser-643. Residues Lys-635 and Lys-642 each participate in a glycyl lysine isopeptide (Lys-Gly) (interchain with G-Cter in SUMO2) cross-link. Phosphoserine occurs at positions 653 and 677. Residues Lys-696 and Lys-697 each participate in a glycyl lysine isopeptide (Lys-Gly) (interchain with G-Cter in SUMO2) cross-link.

This sequence belongs to the RAP80 family. Component of the ARISC complex, at least composed of UIMC1/RAP80, ABRAXAS1, BRCC3/BRCC36, BABAM2 and BABAM1/NBA1. Component of the BRCA1-A complex, at least composed of the BRCA1, BARD1, UIMC1/RAP80, ABRAXAS1, BRCC3/BRCC36, BABAM2 and BABAM1/NBA1. In the BRCA1-A complex, interacts directly with ABRAXAS1. Interacts with UBE2I. Interacts with NR6A1. Interacts with ESR1. Interacts with TSP57. Interacts with TRAIP. Sumoylated. In terms of processing, phosphorylated upon DNA damage by ATM or ATR. As to expression, expressed in testis, ovary, thymus and heart. Expressed in germ cells of the testis.

It is found in the nucleus. Functionally, ubiquitin-binding protein. Specifically recognizes and binds 'Lys-63'-linked ubiquitin. Plays a central role in the BRCA1-A complex by specifically binding 'Lys-63'-linked ubiquitinated histones H2A and H2AX at DNA lesions sites, leading to target the BRCA1-BARD1 heterodimer to sites of DNA damage at double-strand breaks (DSBs). The BRCA1-A complex also possesses deubiquitinase activity that specifically removes 'Lys-63'-linked ubiquitin on histones H2A and H2AX. Also weakly binds monoubiquitin but with much less affinity than 'Lys-63'-linked ubiquitin. May interact with monoubiquitinated histones H2A and H2B; the relevance of such results is however unclear in vivo. Does not bind Lys-48'-linked ubiquitin. May indirectly act as a transcriptional repressor by inhibiting the interaction of NR6A1 with the corepressor NCOR1. In Homo sapiens (Human), this protein is BRCA1-A complex subunit RAP80 (UIMC1).